Consider the following 307-residue polypeptide: tRNA dimethylallyltransferase (307 aa).

6 to 13 (GATATGKT) contributes to the ATP binding site. Position 8 to 13 (8 to 13 (TATGKT)) interacts with substrate. The interval 31 to 34 (DSMM) is interaction with substrate tRNA.

The protein belongs to the IPP transferase family. Monomer. Mg(2+) is required as a cofactor.

The enzyme catalyses adenosine(37) in tRNA + dimethylallyl diphosphate = N(6)-dimethylallyladenosine(37) in tRNA + diphosphate. Functionally, catalyzes the transfer of a dimethylallyl group onto the adenine at position 37 in tRNAs that read codons beginning with uridine, leading to the formation of N6-(dimethylallyl)adenosine (i(6)A). In Sulfurihydrogenibium sp. (strain YO3AOP1), this protein is tRNA dimethylallyltransferase.